An 846-amino-acid chain; its full sequence is Leucine--tRNA ligase (846 aa).

The 'HIGH' region signature appears at 42-52; sequence PYPSGNLHMGH. A 'KMSKS' region motif is present at residues 586 to 590; sequence KMSKS. Lys-589 serves as a coordination point for ATP.

The protein belongs to the class-I aminoacyl-tRNA synthetase family.

The protein localises to the cytoplasm. It carries out the reaction tRNA(Leu) + L-leucine + ATP = L-leucyl-tRNA(Leu) + AMP + diphosphate. This Heliobacterium modesticaldum (strain ATCC 51547 / Ice1) protein is Leucine--tRNA ligase.